The primary structure comprises 701 residues: Phytyl ester synthase 2, chloroplastic (701 aa).

The transit peptide at 1–65 directs the protein to the chloroplast; that stretch reads MAVTVLPSVS…KNNDENRATV (65 aa). The disordered stretch occupies residues 37–64; the sequence is SVTSTSSPPTPSSGVQRRRKNNDENRAT.

The protein belongs to the diacylglycerol acyltransferase family.

It is found in the plastid. It localises to the chloroplast. The protein localises to the plastoglobule. It catalyses the reaction a 1,2-diacyl-3-O-(beta-D-galactosyl)-sn-glycerol + a 1,2-diacylglycerol = an acyl-3-O-(beta-D-galactosyl)-sn-glycerol + a triacylglycerol. It carries out the reaction a 1,2-diacylglycerol + a fatty acyl-CoA = a triacylglycerol + CoA. The enzyme catalyses a fatty acyl-[ACP] + a 1,2-diacylglycerol = a triacylglycerol + holo-[ACP]. The catalysed reaction is phytol + a fatty acyl-CoA = a fatty acid phytyl ester + CoA. It catalyses the reaction phytol + tetradecanoyl-CoA = tetradecanoate phytyl ester + CoA. It carries out the reaction a 1,3-diacylglycerol + a fatty acyl-CoA = a triacylglycerol + CoA. The enzyme catalyses 1,2-dihexanoylglycerol + tetradecanoyl-CoA = 1,2-dihexanoyl-3-tetradecanoylglycerol + CoA. The catalysed reaction is 1,2-dihexanoylglycerol + hexadecanoyl-CoA = 1,2-dihexanoyl-3-hexadecanoylglycerol + CoA. It catalyses the reaction 1,2-dihexanoylglycerol + octadecanoyl-CoA = 1,2-dihexanoyl-3-octadecanoylglycerol + CoA. It carries out the reaction (7Z,10Z,13Z)-hexadecatrienoyl-CoA + 1,2-dihexanoylglycerol = 1,2-dihexanoyl-3-(7Z,10Z,13Z-hexadecatrienoyl)-glycerol + CoA. The enzyme catalyses 1,2-dihexanoylglycerol + (9Z)-octadecenoyl-CoA = 1,2-dihexanoyl-3-(9Z-octadecenoyl)-glycerol + CoA. The catalysed reaction is 1,2-dihexanoylglycerol + (9Z,12Z,15Z)-octadecatrienoyl-CoA = 1,2-dihexanoyl-3-(9Z,12Z,15Z-octadecatrienoyl)-glycerol + CoA. It catalyses the reaction phytol + decanoyl-CoA = decanoate phytyl ester + CoA. It carries out the reaction (7Z,10Z,13Z)-hexadecatrienoyl-CoA + phytol = (7Z,10Z,13Z)-hexadecatrienoate phytyl ester + CoA. The enzyme catalyses phytol + dodecanoyl-CoA = dodecanoate phytyl ester + CoA. In terms of biological role, acyltransferase involved in fatty acid phytyl ester synthesis in chloroplasts, a process required for the maintenance of the photosynthetic membrane integrity during abiotic stress and senescence. Exhibits phytyl ester synthesis and diacylglycerol acyltransferase activities with broad substrate specificities, and can employ acyl-CoAs, acyl carrier proteins, and galactolipids as acyl donors. In Arabidopsis thaliana (Mouse-ear cress), this protein is Phytyl ester synthase 2, chloroplastic.